The chain runs to 453 residues: Formimidoylglutamate deiminase (453 aa).

Zn(2+)-binding residues include histidine 56 and histidine 58. N-formimidoyl-L-glutamate is bound by residues glutamine 61, arginine 82, tyrosine 121, histidine 206, and arginine 209. Histidine 232 contacts Zn(2+). N-formimidoyl-L-glutamate is bound at residue glutamate 235. Catalysis depends on proton acceptor residues histidine 269 and aspartate 320. Aspartate 320 serves as a coordination point for Zn(2+).

This sequence belongs to the metallo-dependent hydrolases superfamily. Homodimer. Zn(2+) serves as cofactor.

It catalyses the reaction N-formimidoyl-L-glutamate + H2O = N-formyl-L-glutamate + NH4(+). Its pathway is amino-acid degradation; L-histidine degradation into L-glutamate; L-glutamate from N-formimidoyl-L-glutamate (deiminase route): step 1/2. With respect to regulation, inhibited by the metal chelator dipicolinate. Inhibited by N-formimino-L-aspartate and N-guanidino-L-glutaric acid. Catalyzes the hydrolysis of N-formimino-L-glutamate to N-formyl-L-glutamate and ammonia. The polypeptide is Formimidoylglutamate deiminase (Pseudomonas aeruginosa (strain ATCC 15692 / DSM 22644 / CIP 104116 / JCM 14847 / LMG 12228 / 1C / PRS 101 / PAO1)).